Consider the following 134-residue polypeptide: uncharacterized protein (134 aa).

An N-terminal signal peptide occupies residues 1–16 (MAKAVALLLAAIAASA).

This is an uncharacterized protein from Oryza sativa subsp. indica (Rice).